We begin with the raw amino-acid sequence, 178 residues long: ATP-dependent protease subunit HslV (178 aa).

Thr-7 is a catalytic residue. Na(+) contacts are provided by Gly-162, Cys-165, and Thr-168.

Belongs to the peptidase T1B family. HslV subfamily. In terms of assembly, a double ring-shaped homohexamer of HslV is capped on each side by a ring-shaped HslU homohexamer. The assembly of the HslU/HslV complex is dependent on binding of ATP.

The protein localises to the cytoplasm. It catalyses the reaction ATP-dependent cleavage of peptide bonds with broad specificity.. Its activity is regulated as follows. Allosterically activated by HslU binding. In terms of biological role, protease subunit of a proteasome-like degradation complex believed to be a general protein degrading machinery. The chain is ATP-dependent protease subunit HslV from Azoarcus sp. (strain BH72).